The chain runs to 100 residues: uncharacterized protein (100 aa).

This is an uncharacterized protein from Haemophilus influenzae (strain ATCC 51907 / DSM 11121 / KW20 / Rd).